The chain runs to 263 residues: MPEGPEIRRAADNLEAAIKGKPLTDVWFAFAQLKPYESQLTGQLVTRIETRGKALLTHFSNGLTLYSHNQLYGVWRVIDTGEIPQTTRILRVRLQTADKTILLYSASDIEMLTAEQLTTHPFLQRVGPDVLDARLTPEEVKARLLSPRFRNRQFSGLLLDQAFLAGLGNYLRVEILWQVGLTGQHKAKDLNEAQLNALSHALLDIPRLSYTTRGQADENKHHGALFRFKVFHRDGEACERCGGIIEKTTLSSRPFYWCPHCQK.

Proline 2 serves as the catalytic Schiff-base intermediate with DNA. Residue glutamate 3 is the Proton donor of the active site. The Proton donor; for beta-elimination activity role is filled by lysine 53. DNA is bound by residues glutamine 70, arginine 125, and asparagine 169. The FPG-type zinc-finger motif lies at 229-263; it reads KVFHRDGEACERCGGIIEKTTLSSRPFYWCPHCQK. The active-site Proton donor; for delta-elimination activity is arginine 253.

It belongs to the FPG family. Zn(2+) serves as cofactor.

It catalyses the reaction 2'-deoxyribonucleotide-(2'-deoxyribose 5'-phosphate)-2'-deoxyribonucleotide-DNA = a 3'-end 2'-deoxyribonucleotide-(2,3-dehydro-2,3-deoxyribose 5'-phosphate)-DNA + a 5'-end 5'-phospho-2'-deoxyribonucleoside-DNA + H(+). Its function is as follows. Involved in base excision repair of DNA damaged by oxidation or by mutagenic agents. Acts as a DNA glycosylase that recognizes and removes damaged bases. Has a preference for oxidized pyrimidines, such as thymine glycol, 5,6-dihydrouracil and 5,6-dihydrothymine. Has AP (apurinic/apyrimidinic) lyase activity and introduces nicks in the DNA strand. Cleaves the DNA backbone by beta-delta elimination to generate a single-strand break at the site of the removed base with both 3'- and 5'-phosphates. This is Endonuclease 8 from Salmonella heidelberg (strain SL476).